We begin with the raw amino-acid sequence, 101 residues long: Apolipoprotein C-II (101 aa).

The first 22 residues, 1-22 (MGTRFLLALCLVLLVLGFEVQG), serve as a signal peptide directing secretion. Positions 66-74 (AVDEKLRDL) are lipid binding. The tract at residues 78 to 101 (STAAMSTYTGIFTDQVLSVLKGEE) is lipoprotein lipase cofactor.

The protein belongs to the apolipoprotein C2 family. In terms of processing, proapolipoprotein C-II is synthesized as a sialic acid containing glycoprotein which is subsequently desialylated prior to its proteolytic processing. Post-translationally, proapolipoprotein C-II, the major form found in plasma undergoes proteolytic cleavage of its N-terminal hexapeptide to generate apolipoprotein C-II, which occurs as the minor form in plasma.

The protein localises to the secreted. Functionally, component of chylomicrons, very low-density lipoproteins (VLDL), low-density lipoproteins (LDL), and high-density lipoproteins (HDL) in plasma. Plays an important role in lipoprotein metabolism as an activator of lipoprotein lipase. Both proapolipoprotein C-II and apolipoprotein C-II can activate lipoprotein lipase. This is Apolipoprotein C-II (APOC2) from Macaca fascicularis (Crab-eating macaque).